Here is a 224-residue protein sequence, read N- to C-terminus: Response regulator protein GraR (224 aa).

Residues 2–115 (QILLVEDDNT…VLIAKLQAIY (114 aa)) enclose the Response regulatory domain. Position 51 is a 4-aspartylphosphate (aspartate 51). Residues 126–224 (KRTLTWQDAI…KVGKGYMAHE (99 aa)) constitute a DNA-binding region (ompR/PhoB-type). A phosphothreonine mark is found at threonine 128, threonine 130, and threonine 149.

As to quaternary structure, interacts with GraX. In terms of processing, phosphorylated by GraS. Phosphorylated by Stk1; phosphorylation increases the DNA-binding activity of GraR.

The protein resides in the cytoplasm. Its function is as follows. Member of the two-component regulatory system GraR/GraS involved in resistance against cationic antimicrobial peptides (CAMPs). Upon phosphorylation by GraS, functions as a transcription regulator by direct binding to promoter regions of target genes such as adhesins, exoproteins, transporters, toxins, and proteins involved in cell wall synthesis. Down-regulates the expression of many genes involved in RNA and amino acid synthesis or glycolysis. The chain is Response regulator protein GraR (graR) from Staphylococcus aureus (strain bovine RF122 / ET3-1).